A 193-amino-acid chain; its full sequence is Ribosome maturation factor RimM (193 aa).

Residues 97–172 (DDEFYLTDLV…LILADPPALV (76 aa)) form the PRC barrel domain. Positions 168 to 193 (PPALVGDHEGPEEKGLDENEELGDRD) are disordered. Residues 173–193 (GDHEGPEEKGLDENEELGDRD) show a composition bias toward basic and acidic residues.

Belongs to the RimM family. In terms of assembly, binds ribosomal protein uS19.

The protein resides in the cytoplasm. Functionally, an accessory protein needed during the final step in the assembly of 30S ribosomal subunit, possibly for assembly of the head region. Essential for efficient processing of 16S rRNA. May be needed both before and after RbfA during the maturation of 16S rRNA. It has affinity for free ribosomal 30S subunits but not for 70S ribosomes. The sequence is that of Ribosome maturation factor RimM from Caulobacter vibrioides (strain ATCC 19089 / CIP 103742 / CB 15) (Caulobacter crescentus).